We begin with the raw amino-acid sequence, 635 residues long: Threonine--tRNA ligase (635 aa).

The TGS domain maps to 1 to 58 (MIRVICDNETFELPTGSTAADFASKIKNSHYFAGVVINDQIKDLSTTLSEGDVLKFVT). The interval 237-528 (DHRVLGTKLD…LIEHFKGRFP (292 aa)) is catalytic. Residues cysteine 328, histidine 379, and histidine 505 each contribute to the Zn(2+) site.

The protein belongs to the class-II aminoacyl-tRNA synthetase family. As to quaternary structure, homodimer. Requires Zn(2+) as cofactor.

Its subcellular location is the cytoplasm. The enzyme catalyses tRNA(Thr) + L-threonine + ATP = L-threonyl-tRNA(Thr) + AMP + diphosphate + H(+). Catalyzes the attachment of threonine to tRNA(Thr) in a two-step reaction: L-threonine is first activated by ATP to form Thr-AMP and then transferred to the acceptor end of tRNA(Thr). Also edits incorrectly charged L-seryl-tRNA(Thr). The chain is Threonine--tRNA ligase from Chlamydia felis (strain Fe/C-56) (Chlamydophila felis).